Consider the following 303-residue polypeptide: Pyridoxal 5'-phosphate synthase subunit PdxS (303 aa).

Asp33 contacts D-ribose 5-phosphate. Lys90 functions as the Schiff-base intermediate with D-ribose 5-phosphate in the catalytic mechanism. A D-ribose 5-phosphate-binding site is contributed by Gly162. Arg174 provides a ligand contact to D-glyceraldehyde 3-phosphate. D-ribose 5-phosphate contacts are provided by residues Gly223 and 244–245 (GS).

Belongs to the PdxS/SNZ family. In the presence of PdxT, forms a dodecamer of heterodimers.

It carries out the reaction aldehydo-D-ribose 5-phosphate + D-glyceraldehyde 3-phosphate + L-glutamine = pyridoxal 5'-phosphate + L-glutamate + phosphate + 3 H2O + H(+). It participates in cofactor biosynthesis; pyridoxal 5'-phosphate biosynthesis. Functionally, catalyzes the formation of pyridoxal 5'-phosphate from ribose 5-phosphate (RBP), glyceraldehyde 3-phosphate (G3P) and ammonia. The ammonia is provided by the PdxT subunit. Can also use ribulose 5-phosphate and dihydroxyacetone phosphate as substrates, resulting from enzyme-catalyzed isomerization of RBP and G3P, respectively. The protein is Pyridoxal 5'-phosphate synthase subunit PdxS of Mycolicibacterium smegmatis (strain ATCC 700084 / mc(2)155) (Mycobacterium smegmatis).